Consider the following 56-residue polypeptide: Large ribosomal subunit protein bL33 (56 aa).

This sequence belongs to the bacterial ribosomal protein bL33 family.

The chain is Large ribosomal subunit protein bL33 from Anaplasma phagocytophilum (strain HZ).